The primary structure comprises 200 residues: GTP cyclohydrolase-2 (200 aa).

49-53 is a binding site for GTP; the sequence is RVHSE. Positions 54, 65, and 67 each coordinate Zn(2+). GTP contacts are provided by residues Gln-70, 92 to 94, and Thr-114; that span reads EGR. The active-site Proton acceptor is Asp-126. Catalysis depends on Arg-128, which acts as the Nucleophile. GTP-binding residues include Thr-149 and Lys-154.

This sequence belongs to the GTP cyclohydrolase II family. As to quaternary structure, homodimer. The cofactor is Zn(2+).

It catalyses the reaction GTP + 4 H2O = 2,5-diamino-6-hydroxy-4-(5-phosphoribosylamino)-pyrimidine + formate + 2 phosphate + 3 H(+). Its pathway is cofactor biosynthesis; riboflavin biosynthesis; 5-amino-6-(D-ribitylamino)uracil from GTP: step 1/4. Functionally, catalyzes the conversion of GTP to 2,5-diamino-6-ribosylamino-4(3H)-pyrimidinone 5'-phosphate (DARP), formate and pyrophosphate. This chain is GTP cyclohydrolase-2, found in Klebsiella pneumoniae subsp. pneumoniae (strain ATCC 700721 / MGH 78578).